We begin with the raw amino-acid sequence, 202 residues long: Small ribosomal subunit protein uS4c (202 aa).

In terms of domain architecture, S4 RNA-binding spans 90–154 (MRLDNIIFRL…SQSIITKNLN (65 aa)).

The protein belongs to the universal ribosomal protein uS4 family. Part of the 30S ribosomal subunit. Contacts protein S5. The interaction surface between S4 and S5 is involved in control of translational fidelity.

Its subcellular location is the plastid. It localises to the chloroplast. One of the primary rRNA binding proteins, it binds directly to 16S rRNA where it nucleates assembly of the body of the 30S subunit. Its function is as follows. With S5 and S12 plays an important role in translational accuracy. The protein is Small ribosomal subunit protein uS4c (rps4) of Ricciocarpos natans (Liverwort).